A 199-amino-acid polypeptide reads, in one-letter code: Glycerol-3-phosphate acyltransferase (199 aa).

The next 4 membrane-spanning stretches (helical) occupy residues 2-22 (LEVLLVLLGYVLGSVPTGILV), 77-97 (PWVLAAVALAAVVGHCWPVFL), 113-133 (IALAPPVGLGMFALWWVVALA), and 139-159 (LAAMVVTVVSPFAFLLSGQPL).

It belongs to the PlsY family. Probably interacts with PlsX.

Its subcellular location is the cell membrane. It catalyses the reaction an acyl phosphate + sn-glycerol 3-phosphate = a 1-acyl-sn-glycero-3-phosphate + phosphate. The protein operates within lipid metabolism; phospholipid metabolism. Functionally, catalyzes the transfer of an acyl group from acyl-phosphate (acyl-PO(4)) to glycerol-3-phosphate (G3P) to form lysophosphatidic acid (LPA). This enzyme utilizes acyl-phosphate as fatty acyl donor, but not acyl-CoA or acyl-ACP. The sequence is that of Glycerol-3-phosphate acyltransferase from Rubrobacter xylanophilus (strain DSM 9941 / JCM 11954 / NBRC 16129 / PRD-1).